Here is a 212-residue protein sequence, read N- to C-terminus: Probable transaldolase (212 aa).

The Schiff-base intermediate with substrate role is filled by K84.

The protein belongs to the transaldolase family. Type 3B subfamily.

It is found in the cytoplasm. It catalyses the reaction D-sedoheptulose 7-phosphate + D-glyceraldehyde 3-phosphate = D-erythrose 4-phosphate + beta-D-fructose 6-phosphate. Its pathway is carbohydrate degradation; pentose phosphate pathway; D-glyceraldehyde 3-phosphate and beta-D-fructose 6-phosphate from D-ribose 5-phosphate and D-xylulose 5-phosphate (non-oxidative stage): step 2/3. Transaldolase is important for the balance of metabolites in the pentose-phosphate pathway. The sequence is that of Probable transaldolase from Bacillus pumilus (strain SAFR-032).